The following is a 357-amino-acid chain: Solute carrier family 25 member 3 (357 aa).

A mitochondrion-targeting transit peptide spans 1-45 (MFSSVAHLARANPFNAPHLQLVHDGLSGPRSPPAPPRRSRHLAAA). The Mitochondrial intermembrane segment spans residues 46 to 58 (AVEEYSCEFGSMK). Solcar repeat units lie at residues 58-142 (KYYA…FKAL), 155-239 (WRTS…TVEA), and 256-334 (EQLV…VKVY). Residues 59–81 (YYALCGFGGVLSCGLTHTAVVPL) traverse the membrane as a helical segment. The Mitochondrial matrix segment spans residues 82–116 (DLVKCRMQVDPQKYKGIFNGFSITLKEDGVRGLAK). An N6-acetyllysine modification is found at lysine 94. The residue at position 107 (lysine 107) is an N6-methyllysine. Residues 117-136 (GWAPTLIGYSMQGLCKFGFY) traverse the membrane as a helical segment. Residues 137–156 (EVFKALYSNILGEENTYLWR) lie on the Mitochondrial intermembrane side of the membrane. A helical transmembrane segment spans residues 157 to 178 (TSLYLASSASAEFFADIALAPM). Residues 179-213 (EAAKVRIQTQPGYANTLREAVPKMYKEEGLNAFYK) lie on the Mitochondrial matrix side of the membrane. Tyrosine 191 is modified (phosphotyrosine). Lysine 204 carries the N6-acetyllysine modification. The helical transmembrane segment at 214–233 (GVAPLWMRQIPYTMMKFACF) threads the bilayer. Residues 234 to 256 (ERTVEALYKFVVPKPRSECTKAE) are Mitochondrial intermembrane-facing. A helical transmembrane segment spans residues 257 to 279 (QLVVTFVAGYIAGVFCAIVSHPA). Residues 280 to 309 (DSVVSVLNKEKGSTASQVLQRLGFRGVWKG) lie on the Mitochondrial matrix side of the membrane. Residues 310–328 (LFARIIMIGTLTALQWFIY) traverse the membrane as a helical segment. The Mitochondrial intermembrane portion of the chain corresponds to 329–357 (DSVKVYFRLPRPPPPEMPESLKKKLGLTE).

The protein belongs to the mitochondrial carrier (TC 2.A.29) family. Interacts with PPIF; the interaction is impaired by CsA.

It localises to the mitochondrion inner membrane. The enzyme catalyses phosphate(in) + H(+)(in) = phosphate(out) + H(+)(out). In terms of biological role, inorganic ion transporter that transports phosphate or copper ions across the mitochondrial inner membrane into the matrix compartment. Mediates proton-coupled symport of phosphate ions necessary for mitochondrial oxidative phosphorylation of ADP to ATP. Transports copper ions probably in the form of anionic copper(I) complexes to maintain mitochondrial matrix copper pool and to supply copper for cytochrome C oxidase complex assembly. May also play a role in regulation of the mitochondrial permeability transition pore (mPTP). This Mus musculus (Mouse) protein is Solute carrier family 25 member 3.